A 709-amino-acid chain; its full sequence is Elongation factor G (709 aa).

Positions 10–286 constitute a tr-type G domain; it reads NKVRNIGIMA…AVVDFLPSPL (277 aa). GTP contacts are provided by residues 19–26, 83–87, and 137–140; these read AHIDAGKT, DTPGH, and NKMD.

This sequence belongs to the TRAFAC class translation factor GTPase superfamily. Classic translation factor GTPase family. EF-G/EF-2 subfamily.

It localises to the cytoplasm. Catalyzes the GTP-dependent ribosomal translocation step during translation elongation. During this step, the ribosome changes from the pre-translocational (PRE) to the post-translocational (POST) state as the newly formed A-site-bound peptidyl-tRNA and P-site-bound deacylated tRNA move to the P and E sites, respectively. Catalyzes the coordinated movement of the two tRNA molecules, the mRNA and conformational changes in the ribosome. The protein is Elongation factor G of Corynebacterium glutamicum (strain R).